A 536-amino-acid polypeptide reads, in one-letter code: G-protein coupled receptor Mth2 (536 aa).

5 disulfides stabilise this stretch: cysteine 17-cysteine 71, cysteine 73-cysteine 78, cysteine 82-cysteine 177, cysteine 83-cysteine 96, and cysteine 138-cysteine 197. Asparagine 24 and asparagine 33 each carry an N-linked (GlcNAc...) asparagine glycan. Residues asparagine 103, asparagine 113, asparagine 118, asparagine 159, and asparagine 184 are each glycosylated (N-linked (GlcNAc...) asparagine). The chain crosses the membrane as a helical span at residues 212–232 (YAMMFSIPFMMLTIAVYLLIP). The Cytoplasmic segment spans residues 233–241 (ELRNQHGKS). The chain crosses the membrane as a helical span at residues 242 to 262 (LVCYLIGLTVGYSSLCYVQLY). Residues 263–273 (QVDATGVTCKV) lie on the Extracellular side of the membrane. A helical membrane pass occupies residues 274–294 (FGYTAYFFFMGAYMWLSVISF). At 295–314 (DLWHNFRGTRGINRFQEKKR) the chain is on the cytoplasmic side. Residues 315 to 335 (FLFYSLYSWGIALVFLAFTYC) form a helical membrane-spanning segment. Topologically, residues 336 to 365 (AQQLSNLPDNLKPGIGDGVYCWLDMSNWAA) are extracellular. A helical membrane pass occupies residues 366–386 (MIYFYGPILAIVVANTIMFIM). Residues 387 to 417 (TAIKIHGVQREMARIIASENSTKNLRTEKDK) lie on the Cytoplasmic side of the membrane. A helical transmembrane segment spans residues 418–438 (FGLFLRLFLIMGITWLTELIS). Residues 439-449 (YFVGSDKGWSK) lie on the Extracellular side of the membrane. Residues 450–470 (LFYISDLANAMQGFLIFMLFV) form a helical membrane-spanning segment. Topologically, residues 471-536 (MKKKVKHLIT…VDPQKTTIFR (66 aa)) are cytoplasmic. The tract at residues 487–506 (RDGSNQRQSQYSTKTTSSSV) is disordered. Residues 492-505 (QRQSQYSTKTTSSS) are compositionally biased toward low complexity.

The protein belongs to the G-protein coupled receptor 2 family. Mth subfamily. In terms of assembly, homodimer.

The protein resides in the cell membrane. In terms of biological role, involved in biological aging and stress response. Essential for adult survival. This is G-protein coupled receptor Mth2 (mth2) from Drosophila simulans (Fruit fly).